A 47-amino-acid polypeptide reads, in one-letter code: MKKFRWVVLGIVVVVCLLLWAQVFNIMCNQDVQFFSGICAINKFIPW.

Residues 6–26 form a helical membrane-spanning segment; the sequence is WVVLGIVVVVCLLLWAQVFNI.

The protein belongs to the MgrB family. In terms of assembly, may form homooligomers. Probably interacts with the periplasmic domain of PhoQ.

Its subcellular location is the cell inner membrane. Functionally, phoP-regulated transcription is redox-sensitive, being activated when the periplasm becomes more reducing. MgrB acts between DsbA/DsbB and PhoP/PhoQ in this pathway. Represses PhoP/PhoQ signaling, possibly by binding to the periplasmic domain of PhoQ, altering its activity and that of downstream effector PhoP. The chain is PhoP/PhoQ regulator MgrB from Salmonella gallinarum (strain 287/91 / NCTC 13346).